The sequence spans 187 residues: Ion-translocating oxidoreductase complex subunit B (187 aa).

Positions 1–26 (MTHILFAVLVLALLALAFGIILGFAA) are hydrophobic. Residues 32 to 90 (EADPIVDQLDALLPQTQCGQCGYPGCKPYAEALANGDQINKCVPGGDATMRKIADLMGV) enclose the 4Fe-4S domain. Positions 49, 52, 57, 73, 115, 118, 121, 125, 145, 148, 151, and 155 each coordinate [4Fe-4S] cluster. 4Fe-4S ferredoxin-type domains lie at 106-135 (KVAF…GATK) and 136-165 (AMHT…MIPV).

It belongs to the 4Fe4S bacterial-type ferredoxin family. RnfB subfamily. The complex is composed of six subunits: RnfA, RnfB, RnfC, RnfD, RnfE and RnfG. [4Fe-4S] cluster serves as cofactor.

Its subcellular location is the cell inner membrane. Part of a membrane-bound complex that couples electron transfer with translocation of ions across the membrane. This is Ion-translocating oxidoreductase complex subunit B from Aeromonas hydrophila subsp. hydrophila (strain ATCC 7966 / DSM 30187 / BCRC 13018 / CCUG 14551 / JCM 1027 / KCTC 2358 / NCIMB 9240 / NCTC 8049).